The following is a 133-amino-acid chain: Fatty acid-binding protein, heart (133 aa).

Residue Val2 is modified to N-acetylvaline. At Thr8 the chain carries Phosphothreonine. Tyr20 bears the Phosphotyrosine; by Tyr-kinases mark. Phosphoserine is present on Ser23. At Thr30 the chain carries Phosphothreonine. Ser83 carries the phosphoserine modification. 127 to 129 (RTY) provides a ligand contact to (9Z)-octadecenoate. 127-129 (RTY) serves as a coordination point for hexadecanoate. 127-129 (RTY) contacts octadecanoate.

This sequence belongs to the calycin superfamily. Fatty-acid binding protein (FABP) family.

It is found in the cytoplasm. Its function is as follows. FABPs are thought to play a role in the intracellular transport of long-chain fatty acids and their acyl-CoA esters. In Homo sapiens (Human), this protein is Fatty acid-binding protein, heart (FABP3).